The chain runs to 356 residues: NADH-quinone oxidoreductase subunit H (356 aa).

9 helical membrane-spanning segments follow: residues 17–37 (TGGILLVVIWVLLSLAFLLLA), 51–71 (PNVVGPFGLLQSFADFFKFVL), 83–103 (VVFILAPLISLILAFVGWAVV), 116–136 (VGILYLLAMSSLGVYGIIMGG), 162–182 (IGLIIITVILLAGSMNLSTIV), 202–222 (LVLLPVMVVAMGMFYISALAE), 261–281 (IVLMCAMISVLFFGGWNPGFP), 295–315 (LFLALVFYAKICFWFFMFAMA), and 334–354 (VFLPTSLVLVAAVAAWRVFGP).

The protein belongs to the complex I subunit 1 family. In terms of assembly, NDH-1 is composed of 14 different subunits. Subunits NuoA, H, J, K, L, M, N constitute the membrane sector of the complex.

It localises to the cell inner membrane. It catalyses the reaction a quinone + NADH + 5 H(+)(in) = a quinol + NAD(+) + 4 H(+)(out). Functionally, NDH-1 shuttles electrons from NADH, via FMN and iron-sulfur (Fe-S) centers, to quinones in the respiratory chain. The immediate electron acceptor for the enzyme in this species is believed to be ubiquinone. Couples the redox reaction to proton translocation (for every two electrons transferred, four hydrogen ions are translocated across the cytoplasmic membrane), and thus conserves the redox energy in a proton gradient. This subunit may bind ubiquinone. The sequence is that of NADH-quinone oxidoreductase subunit H from Caulobacter vibrioides (strain ATCC 19089 / CIP 103742 / CB 15) (Caulobacter crescentus).